The sequence spans 428 residues: Sialidase-3 (428 aa).

An FRIP motif motif is present at residues 24–27 (YRIP). Substrate-binding residues include Arg25 and Arg45. Asp50 acts as the Proton acceptor in catalysis. Residues 129–140 (IYSQDAGCSWSE) form a BNR 1 repeat. Positions 179 and 181 each coordinate substrate. The stretch at 203–214 (IYSDDLGVTWHH) is one BNR 2 repeat. Positions 225 and 245 each coordinate substrate. A BNR 3 repeat occupies 254 to 265 (ALSTDHGEGFQR). The disordered stretch occupies residues 294 to 318 (RCQDSSSKDAPTIQQSSPGSSLRLE). Residues 301–313 (KDAPTIQQSSPGS) show a composition bias toward polar residues. The residue at position 313 (Ser313) is a Phosphoserine. Residue Arg340 coordinates substrate. Tyr370 (nucleophile) is an active-site residue. Glu387 is a catalytic residue.

Belongs to the glycosyl hydrolase 33 family. In terms of assembly, interacts with CAV1; this interaction enhances NEU3 sialidase activity within caveola. Interacts with EGFR; this interaction mediates desialylation of EGFR and enhances downstream signaling. In terms of processing, palmitoylated; may regulate intracellular trafficking and anchorage to plasma membrane and endomembranes. Highly expressed in skeletal muscle, testis, adrenal gland and thymus, followed by pancreas, liver, heart and thymus. Weakly expressed in kidney, placenta, brain and lung.

It localises to the cell membrane. Its subcellular location is the membrane. The protein resides in the caveola. It is found in the early endosome membrane. The protein localises to the recycling endosome membrane. It localises to the lysosome membrane. It catalyses the reaction Hydrolysis of alpha-(2-&gt;3)-, alpha-(2-&gt;6)-, alpha-(2-&gt;8)- glycosidic linkages of terminal sialic acid residues in oligosaccharides, glycoproteins, glycolipids, colominic acid and synthetic substrates.. The catalysed reaction is a ganglioside GD1a + H2O = a ganglioside GM1 + N-acetylneuraminate. The enzyme catalyses a ganglioside GD1a (d18:1(4E)) + H2O = a ganglioside GM1 (d18:1(4E)) + N-acetylneuraminate. It carries out the reaction a ganglioside GD1b + H2O = a ganglioside GM1 + N-acetylneuraminate. It catalyses the reaction a ganglioside GD1b (d18:1(4E)) + H2O = a ganglioside GM1 (d18:1(4E)) + N-acetylneuraminate. The catalysed reaction is a ganglioside GD3 + H2O = a ganglioside GM3 + N-acetylneuraminate. The enzyme catalyses a ganglioside GD3 (d18:1(4E)) + H2O = a ganglioside GM3 (d18:1(4E)) + N-acetylneuraminate. It carries out the reaction a ganglioside GM3 + H2O = a beta-D-galactosyl-(1-&gt;4)-beta-D-glucosyl-(1&lt;-&gt;1)-ceramide + N-acetylneuraminate. It catalyses the reaction a ganglioside GM1 + H2O = a ganglioside GA1 + N-acetylneuraminate. The catalysed reaction is a ganglioside GM1 (d18:1(4E)) + H2O = a ganglioside GA1 (d18:1(4E)) + N-acetylneuraminate. The enzyme catalyses a ganglioside GM2 (d18:1(4E)) + H2O = a ganglioside GA2 (d18:1(4E)) + N-acetylneuraminate. It carries out the reaction a ganglioside GM3 (d18:1(4E)) + H2O = a beta-D-Gal-(1-&gt;4)-beta-D-Glc-(1&lt;-&gt;1)-Cer(d18:1(4E)) + N-acetylneuraminate. It catalyses the reaction a ganglioside GT1b + H2O = a ganglioside GD1b + N-acetylneuraminate. In terms of biological role, exo-alpha-sialidase that catalyzes the hydrolytic cleavage of the terminal sialic acid (N-acetylneuraminic acid, Neu5Ac) of a glycan moiety in the catabolism of glycolipids, glycoproteins and oligosacharides. Displays high catalytic efficiency for gangliosides including alpha-(2-&gt;3)-sialylated GD1a and GM3 and alpha-(2-&gt;8)-sialylated GD3. Plays a role in the regulation of transmembrane signaling through the modulation of ganglioside content of the lipid bilayer and by direct interaction with signaling receptors, such as EGFR. Desialylates EGFR and activates downstream signaling in proliferating cells. Contributes to clathrin-mediated endocytosis by regulating sorting of endocytosed receptors to early and recycling endosomes. The protein is Sialidase-3 (NEU3) of Homo sapiens (Human).